Reading from the N-terminus, the 342-residue chain is Antihemorrhagic factor HSF (342 aa).

The N-terminal stretch at 1–19 (MNSLVALVLLGQIIGSTLS) is a signal peptide. 2 Cystatin fetuin-A-type domains span residues 22–130 (VRGD…VKCH) and 141–254 (RNCS…SNCV). The Cell attachment site motif lies at 23-25 (RGD). The indispensable for metalloproteinase inhibition stretch occupies residues 24-108 (GDLECDDKEA…RQQHNHAVEM (85 aa)). Cystine bridges form between cysteine 28–cysteine 332, cysteine 85–cysteine 96, cysteine 110–cysteine 129, cysteine 143–cysteine 146, cysteine 205–cysteine 217, and cysteine 230–cysteine 253. Asparagine 142 carries N-linked (GlcNAc...) asparagine glycosylation. An N-linked (GlcNAc...) asparagine glycan is attached at asparagine 204. An N-linked (GlcNAc...) asparagine glycan is attached at asparagine 282.

Belongs to the fetuin family. In terms of processing, cys-63 may exist in a mixed disulfide form with a thiol compound such as glutathione. As to expression, expressed by the liver.

Its subcellular location is the secreted. Inhibits hemorrhagic and proteolytic activities of metalloproteinases (HR1A, HR1B, HR2a, HR2b and H2 proteinase from T.flavodidis and brevilysins H3, H4, H6 and L4 from A.halys brevicaudus). Has no effect on brevilysins H2. Has no effect on papain and cathepsin-B. The sequence is that of Antihemorrhagic factor HSF from Protobothrops flavoviridis (Habu).